Consider the following 89-residue polypeptide: Small ribosomal subunit protein bS20 (89 aa).

It belongs to the bacterial ribosomal protein bS20 family.

Binds directly to 16S ribosomal RNA. The protein is Small ribosomal subunit protein bS20 of Helicobacter pylori (strain P12).